The primary structure comprises 595 residues: Cyclin-dependent kinase-like 3 (595 aa).

One can recognise a Protein kinase domain in the interval 4–286 (YETLGKVGEG…STDLLRHDYF (283 aa)). Residues 10–18 (VGEGSYGTV) and Lys-33 contribute to the ATP site. A [NKR]KIAxRE motif is present at residues 45–51 (KIATREI). The Proton acceptor role is filled by Asp-125. Thr-158 carries the post-translational modification Phosphothreonine. Phosphotyrosine is present on Tyr-160. Disordered regions lie at residues 362-427 (VIKA…PHAG), 448-513 (SSNL…NKRK), and 551-586 (RESKKTDSSKIPTLLSMDPNQEKQEGGDGDCEGKNL). Residues 368 to 386 (GKGDVPDQKKPEYEGDHRQ) show a composition bias toward basic and acidic residues. Positions 387–397 (QGTADDTQPSS) are enriched in polar residues. The span at 448-457 (SSNLSHPNSR) shows a compositional bias: low complexity. Composition is skewed to polar residues over residues 468 to 491 (SSQTIGQTLSNSRQEDTGPTQVQT) and 499 to 509 (RTGQNDQISSG). The span at 570–585 (NQEKQEGGDGDCEGKN) shows a compositional bias: basic and acidic residues.

This sequence belongs to the protein kinase superfamily. CMGC Ser/Thr protein kinase family. CDC2/CDKX subfamily.

It localises to the cytoplasm. It catalyses the reaction L-seryl-[protein] + ATP = O-phospho-L-seryl-[protein] + ADP + H(+). The enzyme catalyses L-threonyl-[protein] + ATP = O-phospho-L-threonyl-[protein] + ADP + H(+). In Mus musculus (Mouse), this protein is Cyclin-dependent kinase-like 3.